Consider the following 397-residue polypeptide: Lymphoid enhancer-binding factor 1 (397 aa).

The segment at 1–60 (MPQLSGGGGGGDPELCATDEMIPFKDEGDPQKEKIFAEISHPEEEGDLADIKSSLVNESE) is CTNNB1-binding. A Glycyl lysine isopeptide (Lys-Gly) (interchain with G-Cter in SUMO) cross-link involves residue K25. Positions 59-102 (SEIIPASNGHEVVRQAPSSQEPYHDKAREHPDEGKHPDGGLYNK) are disordered. Basic and acidic residues predominate over residues 80-96 (PYHDKAREHPDEGKHPD). S130 carries the post-translational modification Phosphoserine. The residue at position 153 (T153) is a Phosphothreonine; by NLK. Position 164 is a phosphoserine; by NLK (S164). Disordered regions lie at residues 164–191 (SPGS…APEI) and 266–296 (VKQE…KRPH). A Glycyl lysine isopeptide (Lys-Gly) (interchain with G-Cter in SUMO) cross-link involves residue K267. The segment covering 267-294 (KQEHPHTDSDLMHVKPQHEQRKEQEPKR) has biased composition (basic and acidic residues). Positions 297–365 (IKKPLNAFML…LHMQLYPGWS (69 aa)) form a DNA-binding region, HMG box. Residues 367–397 (RDNYGKKKKRKREKLQESTSGTGPRMTAAYI) form a disordered region.

Belongs to the TCF/LEF family. Binds the armadillo repeat of CTNNB1 and forms a stable complex. Binds TLE1, ALYREF/THOC4, MDFI and MDFIC. Interacts with NLK. Interacts with EP300 and PIASG. Interacts with DAZAP2. In terms of processing, phosphorylated at Thr-153 and/or Ser-164 by NLK. Phosphorylation by NLK at these sites represses LEF1-mediated transcriptional activation of target genes of the canonical Wnt signaling pathway. As to expression, expressed in Vgamma1.1 and Vgamma2 gamma-delta T-cells, however not expressed in gamma-delta thymocytes fated for Il17a expression (at protein level). Expressed in alpha-beta T-cell lineages. Expressed in the thymus. Found in distinct epithelial cell compartments of the skin and is abundant in the hair-producing progenitors of the follicle.

The protein localises to the nucleus. Transcription factor that binds DNA in a sequence-specific manner. Participates in the Wnt signaling pathway. Activates transcription of target genes in the presence of CTNNB1 and EP300. PIASG antagonizes both Wnt-dependent and Wnt-independent activation by LEF1. TLE1, TLE2, TLE3 and TLE4 repress transactivation mediated by LEF1 and CTNNB1. Regulates T-cell receptor alpha enhancer function. Required for IL17A expressing gamma-delta T-cell maturation and development, via binding to regulator loci of BLK to modulate expression. Acts as a positive regulator of odontoblast differentiation during mesenchymal tooth germ formation, expression is repressed during the bell stage by MSX1-mediated inhibition of CTNNB1 signaling. May play a role in hair cell differentiation and follicle morphogenesis. This Mus musculus (Mouse) protein is Lymphoid enhancer-binding factor 1.